A 162-amino-acid chain; its full sequence is MEIRKRYFLSKKDVKKIKKELEVFFENVDEIIPKKGNVEIAITDDFEIILVDKEPIAFKKDDKVIPTLKLLLKSLPDKNLVVVDIGAIKFLINGADVMAPGIVDADENIKEEDVVFVVDENHKKPICVGIALMNGKEMKEADKGKAIKNLHYVGDKIWNFKG.

One can recognise a PUA domain in the interval lysine 78 to glycine 154.

This is an uncharacterized protein from Methanocaldococcus jannaschii (strain ATCC 43067 / DSM 2661 / JAL-1 / JCM 10045 / NBRC 100440) (Methanococcus jannaschii).